The chain runs to 54 residues: Ovomucoid (54 aa).

The 51-residue stretch at 4–54 (VDCSDYPKPACTVEYMPLCGSDNKTYGNKCNFCNAVVDSNGTLTLSHFGKC) folds into the Kazal-like domain. 3 cysteine pairs are disulfide-bonded: Cys6–Cys36, Cys14–Cys33, and Cys22–Cys54. Asn43 carries an N-linked (GlcNAc...) asparagine glycan.

It localises to the secreted. This Anser canagicus (Emperor goose) protein is Ovomucoid.